The following is a 565-amino-acid chain: uncharacterized protein (565 aa).

Helical transmembrane passes span 4 to 26, 33 to 55, 68 to 90, 97 to 119, and 162 to 184; these read FVQF…AVWV, GYGL…VGAA, SLLY…VNAL, YAIL…TQFF, and ISAM…IILL. 2 RCK C-terminal domains span residues 210 to 295 and 296 to 379; these read PNVD…LGPE and VPDA…IFGV. 5 consecutive transmembrane segments (helical) span residues 389–411, 415–432, 453–472, 482–504, and 539–561; these read LLTL…PAFG, GLGN…VSSI, LGLI…DLLT, IFIV…GFHI, and WLGF…YFAM.

The protein belongs to the AAE transporter (TC 2.A.81) family.

It is found in the cell membrane. This is an uncharacterized protein from Bordetella bronchiseptica (strain ATCC BAA-588 / NCTC 13252 / RB50) (Alcaligenes bronchisepticus).